Reading from the N-terminus, the 160-residue chain is Transcription elongation factor GreA (160 aa).

It belongs to the GreA/GreB family.

Necessary for efficient RNA polymerase transcription elongation past template-encoded arresting sites. The arresting sites in DNA have the property of trapping a certain fraction of elongating RNA polymerases that pass through, resulting in locked ternary complexes. Cleavage of the nascent transcript by cleavage factors such as GreA or GreB allows the resumption of elongation from the new 3'terminus. GreA releases sequences of 2 to 3 nucleotides. This Leuconostoc citreum (strain KM20) protein is Transcription elongation factor GreA.